Reading from the N-terminus, the 20-residue chain is Trypsin inhibitor (20 aa).

A disordered region spans residues 1–20 (APSDTTIAETLTITEEFFPD).

As to expression, hemolymph.

It is found in the secreted. It localises to the extracellular space. Its function is as follows. Inhibits trypsin stoichiometrically. Also inhibits chymotrypsin very weakly. The chain is Trypsin inhibitor from Mythimna unipuncta (Armyworm moth).